Reading from the N-terminus, the 229-residue chain is MAKKKAFTPLFYLSFIVFLPWWISFSFKKCLESWITNWWNTGQSEIFLNDIQEKSILEKFIELEEFVFLDEMIKEYSETHPQEFRIGIHKETIQFIKIQNEGHIHTILHFSTNLICFVILSGYSIWGNENLVILNSWSREFLYNLSDTVKVFSILLLTDLCIGFHSPHGWELMIGSIYQDFGFGYNDQILSGLVSTFPVILDTILKYWIFRYLNRVSPSLVVIYHSMND.

Helical transmembrane passes span 7–27 (FTPL…SFSF), 114–134 (LICF…LVIL), and 189–209 (ILSG…KYWI).

This sequence belongs to the CemA family.

The protein localises to the plastid. It is found in the chloroplast inner membrane. It carries out the reaction K(+)(in) + H(+)(out) = K(+)(out) + H(+)(in). Functionally, contributes to K(+)/H(+) antiport activity by supporting proton efflux to control proton extrusion and homeostasis in chloroplasts in a light-dependent manner to modulate photosynthesis. Prevents excessive induction of non-photochemical quenching (NPQ) under continuous-light conditions. Indirectly promotes efficient inorganic carbon uptake into chloroplasts. The polypeptide is Potassium/proton antiporter CemA (Ipomoea purpurea (Common morning glory)).